A 468-amino-acid polypeptide reads, in one-letter code: 6-phospho-beta-galactosidase (468 aa).

Positions 19, 116, 159, 160, and 297 each coordinate D-galactose 6-phosphate. E160 acts as the Proton donor in catalysis. E375 functions as the Nucleophile in the catalytic mechanism. S428, W429, K435, and Y437 together coordinate D-galactose 6-phosphate.

It belongs to the glycosyl hydrolase 1 family.

The catalysed reaction is a 6-phospho-beta-D-galactoside + H2O = D-galactose 6-phosphate + an alcohol. It participates in carbohydrate metabolism; lactose degradation; D-galactose 6-phosphate and beta-D-glucose from lactose 6-phosphate: step 1/1. The chain is 6-phospho-beta-galactosidase from Streptococcus pyogenes serotype M4 (strain MGAS10750).